The sequence spans 258 residues: Ribosomal RNA small subunit methyltransferase A (258 aa).

Residues His13, Leu15, Gly40, Glu61, Asp86, and Asn106 each contribute to the S-adenosyl-L-methionine site.

The protein belongs to the class I-like SAM-binding methyltransferase superfamily. rRNA adenine N(6)-methyltransferase family. RsmA subfamily.

The protein localises to the cytoplasm. The catalysed reaction is adenosine(1518)/adenosine(1519) in 16S rRNA + 4 S-adenosyl-L-methionine = N(6)-dimethyladenosine(1518)/N(6)-dimethyladenosine(1519) in 16S rRNA + 4 S-adenosyl-L-homocysteine + 4 H(+). In terms of biological role, specifically dimethylates two adjacent adenosines (A1518 and A1519) in the loop of a conserved hairpin near the 3'-end of 16S rRNA in the 30S particle. May play a critical role in biogenesis of 30S subunits. The polypeptide is Ribosomal RNA small subunit methyltransferase A (Coxiella burnetii (strain Dugway 5J108-111)).